Consider the following 277-residue polypeptide: Transcription factor HES-4-B (277 aa).

Residues 1–44 are disordered; that stretch reads MPADSMEKPTASPIAGAPANSAQTPDKPKSASEHRKSSKPIMEK. The span at 26–35 shows a compositional bias: basic and acidic residues; it reads DKPKSASEHR. In terms of domain architecture, bHLH spans 34-91; sequence HRKSSKPIMEKRRRARINESLGQLKTLILDALKKDSSRHSKLEKADILEMTVKHLRNL. An Orange domain is found at 110–143; that stretch reads YRAGFNECMNEVTRFLSTCEGVNTEVRTRLLGHL. Residues 258–277 are disordered; it reads VSPLGGSTRADSAESVWRPW. Positions 274–277 match the WRPW motif motif; that stretch reads WRPW.

Transcription repression requires formation of a complex with a corepressor protein of the Groucho/TLE family. Interacts with the bHLH protein hes6; this interaction may inhibit the transcriptional repressor activity. Binds DNA in the form of a heterodimer with the bHLH protein hey1/hrt1. Interacts (via Orange domain) with id3 (via HLH domain). As to expression, dynamically expressed in the borders of several tissue territories. Expressed in the pre-placodal ectoderm (PPE) from gastrula stage. During gastrulation, expressed in the deep layer of the dorsal lip, the Spemann organizer and three distinct regions in the prospective neuroectoderm: neural plate border, presumptive floor plate/notoplate and anterior neural plate. At later stages, expression is localized to the anterior of the prechordal plate, the presomitic mesoderm, neural tube, neural crest derivatives and several tissues of the central nervous system, with expression in the developing floor plate continues to at least the tadpole stage. From the early tailbud stage, expressed in the dorsoanterior region of the developing pronephros. During early tailbud stages, broadly expressed within the pronephric mesoderm. and in the sensorial layer of the ectoderm covering the pronephros anlagen. During late tailbud to early tadpole stages, expressed in the ventral region of the pronephros. Expression remains in the proximal and distal tubules at late tadpole stages (stage 35).

Its subcellular location is the nucleus. Its function is as follows. Transcriptional repressor. Binds DNA on N-box motifs: 5'-CACNAG-3'. Promotes floor plate development and prechordal plate development. Required for lens development as early as the stage of lens field formation, partly through regulation of gene expression of the cell cycle inhibitor cdknx/p27(xic1). Required for formation of the neural crest downstream of multiple signaling pathways, and acts at the neural plate border via both DNA-binding dependent and independent mechanisms; acts in a DNA-binding dependent manner to repress pro-apoptotic and neural crest differentiation genes, including id3, delta1, and cdknx/p27(xic1), and thus promote the cell survival of neural plate border cells and maintain them in an undifferentiated state. Represses transcription of id3, at least in part through the repression of bmp4. On the other hand, acts in a DNA-independent manner separate from the transcriptional repressor function, to stimulate cell proliferation and promote neural crest formation. Via this DNA-independent route, acts in neurulae upstream of stat3 to transiently up-regulate the notch ligand dll1/delta1, which in turn up-regulates id3 expression. Then interacts directly with id3, which blocks the transcriptional repressor function of hes4-B/hairy2b to allow the progression of neural crest progenitors through specification and differentiation. Also acts via repressor-dependent and repressor-independent mechanisms in early gastrulae to establish the prospective anterior prechordal mesoderm identity in the Spemann organizer; induces specific genes independently from direct transcriptional regulation, and represses the genes specific for neighboring tissues through direct transcriptional repression. Modulates lateral inhibition during notch signaling and regulates the cell context dependent effects of notch (which can have inhibitory, permissive or enhancing roles in muscle or neural differentiation). Inhibits myogenesis. The polypeptide is Transcription factor HES-4-B (hes4-b) (Xenopus laevis (African clawed frog)).